The sequence spans 524 residues: Cytochrome P450 monooxygenase oblB (524 aa).

Helical transmembrane passes span 18–38 (ILNAGIAIAGLSAAYAIGLVI), 225–245 (FHSGVVTLPLFMGLPWLIHLI), and 322–342 (VLIGSGTMTTAGTMCFLVYYI). Cys466 provides a ligand contact to heme.

The protein belongs to the cytochrome P450 family. Heme serves as cofactor.

It localises to the membrane. It carries out the reaction ophiobolin F + 4 reduced [NADPH--hemoprotein reductase] + 4 O2 = ophiobolin C + 4 oxidized [NADPH--hemoprotein reductase] + 6 H2O + 4 H(+). It functions in the pathway secondary metabolite biosynthesis; terpenoid biosynthesis. In terms of biological role, cytochrome P450 monooxygenase; part of the gene cluster that mediates the biosynthesis of the sesterterpenes ophiobolins, fungal phytotoxins with potential anti-cancer activities. The first step of the pathway is performed by the sesterterpene synthase oblA that possesses both prenyl transferase and terpene cyclase activity, converting isopentenyl diphosphate and dimethylallyl diphosphate into geranylfarnesyl diphosphate (GFPP) and further converting GFPP into ophiobolin F, respectively. Other sesterterpenoids (C(25) terpenoids) are found as minor products of oblA. The cytochrome P450 monooxygenase oblB then catalyzes a four-step oxidative transformation of ophiobolin F to yield ophiobolin C. The FAD-dependent oxidoreductase oblC might be involved in a later oxidation step that produces ophiobolin A. This Cochliobolus heterostrophus (strain C5 / ATCC 48332 / race O) (Southern corn leaf blight fungus) protein is Cytochrome P450 monooxygenase oblB.